A 1750-amino-acid chain; its full sequence is Protein TIC 214 (1750 aa).

A run of 6 helical transmembrane segments spans residues 12-32, 69-89, 97-117, 129-149, 177-197, and 216-236; these read KIIN…ALSI, FIMG…YVAL, ILAL…SFFA, LEIY…SCIL, FAWF…LVWI, and IFVI…SIQC. Positions 260–277 are enriched in basic and acidic residues; that stretch reads RERLQKEEERGVEKKEQS. Disordered regions lie at residues 260 to 282, 617 to 638, 718 to 738, 1205 to 1225, and 1419 to 1512; these read RERL…EEDP, ATTT…KKES, STDK…KQRE, RNSR…PKPV, and ETDS…NKKE. Residues 617 to 629 are compositionally biased toward low complexity; sequence ATTTNSKTNTTKD. A compositionally biased stretch (basic and acidic residues) spans 727–738; it reads KKEEKRENKQRE. Positions 1420-1512 are enriched in basic and acidic residues; it reads TDSKQKSETD…TKSDKKNKKE (93 aa).

It belongs to the TIC214 family. In terms of assembly, part of the Tic complex.

The protein localises to the plastid. The protein resides in the chloroplast inner membrane. Involved in protein precursor import into chloroplasts. May be part of an intermediate translocation complex acting as a protein-conducting channel at the inner envelope. The protein is Protein TIC 214 of Cuscuta reflexa (Southern Asian dodder).